The chain runs to 85 residues: Small cysteine and glycine repeat-containing protein 5 (85 aa).

A 10 X 2 AA repeats of CG region spans residues 4-69 (CGCGGCGGCG…TCCSCGCGCG (66 aa)).

This sequence belongs to the KRTAP type 28 family.

Functionally, in the hair cortex, hair keratin intermediate filaments are embedded in an interfilamentous matrix, consisting of hair keratin-associated proteins (KRTAP), which are essential for the formation of a rigid and resistant hair shaft through their extensive disulfide bond cross-linking with abundant cysteine residues of hair keratins. The matrix proteins include the high-sulfur and high-glycine-tyrosine keratins. The protein is Small cysteine and glycine repeat-containing protein 5 of Homo sapiens (Human).